The following is a 444-amino-acid chain: MKYTDFLAHPDEIIPTIRMMYADYRLKNMEIKDPSVRFCYNMLNRVSRSFAMVIQQLPVELRDATCVFYLILRALDTVEDDMAIPKEVKIPMLRTFHEHLSDRSWKIKCGYGPYVDLMDNYPLVTDVYLRFDEGTKAVIKDITRRMGNGMADFIDLDEVLTIPQYDLYCHYVAGLCGIGMCKLFVDSGLEKEDLVAEEDLANQMGLFLQKNNIVRDYLEDINELPAPRMFWPKEIWGNYAKQLDEFKDPKNLDKAMLCLNHMVTDALRHCEVGLRSLSLLHNPNILRAVLIPQVMGVRTLTLVYNNPEVFRGVVKMRRGETAKIFVTTTSKLSFFRTYLQFANEMEQKCLTEAKNDPMVALTLKRVQGVQAACRAAIVKAEIAEGAKGPSTAMVLAGALLIAALAYFAYVYSAGGTSLKALPLFGVVIILAIGLFGRNLALKTV.

Residues Arg-48 and Arg-73 each contribute to the NADP(+) site. 3 residues coordinate Mg(2+): Asp-76, Glu-79, and Asp-80. Positions 215, 315, and 317 each coordinate NADP(+). The next 2 helical transmembrane spans lie at Thr-391–Tyr-411 and Gly-415–Phe-435.

This sequence belongs to the phytoene/squalene synthase family. The cofactor is Mg(2+).

The protein resides in the membrane. The catalysed reaction is 2 (2E,6E)-farnesyl diphosphate + NADH + H(+) = squalene + 2 diphosphate + NAD(+). It catalyses the reaction 2 (2E,6E)-farnesyl diphosphate + NADPH + H(+) = squalene + 2 diphosphate + NADP(+). The enzyme catalyses 2 (2E,6E,10E)-geranylgeranyl diphosphate + NADPH + H(+) = all-trans-lycopaoctaene + 2 diphosphate + NADP(+). Functionally, converts the C20 geranylgeranyl diphosphate (GGPP) to the C40 lycopaoctaene, the first committed intermediate in the production of lycopadiene. Converts farnesyl diphosphate (FPP) into squalene, a precursor for sterol biosynthesis in eukaryotes. Converts with low efficiency the C20 phytyl diphosphate (PPP) to the C40 lycopadiene in vitro. This reaction may not have biological significance in vivo. This chain is Lycopaoctaene synthase, found in Botryococcus braunii (Green alga).